Reading from the N-terminus, the 431-residue chain is Serine--tRNA ligase (431 aa).

238–240 (TAE) is a binding site for L-serine. Position 269-271 (269-271 (RSE)) interacts with ATP. Glu292 serves as a coordination point for L-serine. 356-359 (EISS) contributes to the ATP binding site. Ser391 is a binding site for L-serine.

Belongs to the class-II aminoacyl-tRNA synthetase family. Type-1 seryl-tRNA synthetase subfamily. Homodimer. The tRNA molecule binds across the dimer.

It localises to the cytoplasm. It catalyses the reaction tRNA(Ser) + L-serine + ATP = L-seryl-tRNA(Ser) + AMP + diphosphate + H(+). The catalysed reaction is tRNA(Sec) + L-serine + ATP = L-seryl-tRNA(Sec) + AMP + diphosphate + H(+). Its pathway is aminoacyl-tRNA biosynthesis; selenocysteinyl-tRNA(Sec) biosynthesis; L-seryl-tRNA(Sec) from L-serine and tRNA(Sec): step 1/1. Its function is as follows. Catalyzes the attachment of serine to tRNA(Ser). Is also able to aminoacylate tRNA(Sec) with serine, to form the misacylated tRNA L-seryl-tRNA(Sec), which will be further converted into selenocysteinyl-tRNA(Sec). This Bdellovibrio bacteriovorus (strain ATCC 15356 / DSM 50701 / NCIMB 9529 / HD100) protein is Serine--tRNA ligase.